The sequence spans 568 residues: Protein AF-9 (568 aa).

Positions 1–138 (MASSCAVQVK…EDFRRKLLKA (138 aa)) constitute a YEATS domain. Histone H3K9cr binding stretches follow at residues 78 to 80 (YAG) and 106 to 108 (LHL). A disordered region spans residues 138–475 (AGGDPNRSIH…PPPPLLKTNN (338 aa)). Positions 149-190 (SSSSSSSSSSSSSSSSSSSSSSSSSSSSSSSSSSSSSSSSSS) are enriched in low complexity. A compositionally biased stretch (basic and acidic residues) spans 202–265 (EHKEKPSKDS…PKPMSKEPKP (64 aa)). A phosphoserine mark is found at S288 and S294. Positions 295–300 (AKKRKK) match the Nuclear localization signal motif. The segment covering 303-313 (SEALFKSFSSA) has biased composition (low complexity). Over residues 322–349 (ADKKQIKDKSHVKMGKVKIESETSEKKK) the composition is skewed to basic and acidic residues. Residue K339 forms a Glycyl lysine isopeptide (Lys-Gly) (interchain with G-Cter in SUMO2) linkage. The span at 357-368 (DIVDPNDSDVEE) shows a compositional bias: acidic residues. Residues 371–395 (SSKSDSEQPSPASSSSSSSSSFTPS) show a composition bias toward low complexity. Phosphoserine is present on residues S412 and S419. Positions 414 to 429 (DNEEESDEVEDNDNDS) are enriched in acidic residues. Residues 445-461 (VSLSDGSDSESSSASSP) are compositionally biased toward low complexity. The residue at position 483 (S483) is a Phosphoserine.

In terms of assembly, component of the super elongation complex (SEC), at least composed of EAF1, EAF2, CDK9, MLLT3/AF9, AFF (AFF1 or AFF4), the P-TEFb complex and ELL (ELL, ELL2 or ELL3). Interacts with BCOR. Interacts with CBX8. Interacts with ALKBH4. In terms of tissue distribution, enriched in undifferentiated hematopoietic stem cells in fetal liver, cord blood and bone marrow.

It is found in the nucleus. The protein localises to the chromosome. With respect to regulation, crotonylated lysine binding is strongly inhibited by the peptide XL-07i, carrying a 2-furancarbonyl side chain and capped with a hydrophobic carboxybenzyl group. XL-07i targets the unique pi-pi-pi stacking interaction at the crotonylation recognition site. Its function is as follows. Chromatin reader component of the super elongation complex (SEC), a complex required to increase the catalytic rate of RNA polymerase II transcription by suppressing transient pausing by the polymerase at multiple sites along the DNA. Specifically recognizes and binds acylated histone H3, with a preference for histone H3 that is crotonylated. Crotonylation marks active promoters and enhancers and confers resistance to transcriptional repressors. Recognizes and binds histone H3 crotonylated at 'Lys-9' (H3K9cr), and with slightly lower affinity histone H3 crotonylated at 'Lys-18' (H3K18cr). Also recognizes and binds histone H3 acetylated and butyrylated at 'Lys-9' (H3K9ac and H3K9bu, respectively), but with lower affinity than crotonylated histone H3. In the SEC complex, MLLT3 is required to recruit the complex to crotonylated histones. Recruitment of the SEC complex to crotonylated histones promotes recruitment of DOT1L on active chromatin to deposit histone H3 'Lys-79' methylation (H3K79me). Plays a key role in hematopoietic stem cell (HSC) maintenance by preserving, rather than conferring, HSC stemness. Acts by binding to the transcription start site of active genes in HSCs and sustaining level of H3K79me2, probably by recruiting DOT1L. The chain is Protein AF-9 from Homo sapiens (Human).